Reading from the N-terminus, the 281-residue chain is Putative rRNA methyltransferase YqxC (281 aa).

The 62-residue stretch at 6-67 (ERLDVLLVER…NPLRYVSRGG (62 aa)) folds into the S4 RNA-binding domain.

It belongs to the TlyA family.

The chain is Putative rRNA methyltransferase YqxC (yqxC) from Bacillus subtilis (strain 168).